Consider the following 149-residue polypeptide: Flagellar assembly factor FliW (149 aa).

The protein belongs to the FliW family. Interacts with translational regulator CsrA and flagellin(s).

It is found in the cytoplasm. Its function is as follows. Acts as an anti-CsrA protein, binds CsrA and prevents it from repressing translation of its target genes, one of which is flagellin. Binds to flagellin and participates in the assembly of the flagellum. The protein is Flagellar assembly factor FliW of Thermotoga neapolitana (strain ATCC 49049 / DSM 4359 / NBRC 107923 / NS-E).